Reading from the N-terminus, the 367-residue chain is Choline-phosphate cytidylyltransferase A (367 aa).

The residue at position 1 (Met-1) is an N-acetylmethionine. The tract at residues 1–33 (MDAQCSAKVNARKRRKEAPGPNGATEEDGVPSK) is disordered. Residue Lys-8 is modified to N6-acetyllysine. Residues Ile-84, Phe-85, His-92, and Lys-122 each coordinate CTP. Lys-122 and Trp-151 together coordinate phosphocholine. CTP-binding residues include His-168, Asp-169, Tyr-173, Gln-195, Arg-196, Thr-197, and Ile-200. Amphipathic stretches follow at residues 228–287 (KELN…EFIG) and 298–315 (ALKHMLKEGKGRMLQAIS). Ser-233 carries the post-translational modification Phosphoserine. Positions 272-293 (IDLIQKWEEKSREFIGSFLEMF) are autoinhibitory (AI). The tract at residues 313–367 (AISPKQSPSSSPTRERSPSPSFRWPFSGKTSPPCSPANLSRHKAAAYDISEDEED) is disordered. Ser-315, Ser-319, Ser-321, Ser-322, and Ser-323 each carry phosphoserine. Residues 319-324 (SPSSSP) form repeat 1. Residues 319 to 339 (SPSSSPTRERSPSPSFRWPFS) show a composition bias toward low complexity. Thr-325 carries the post-translational modification Phosphothreonine. Ser-329, Ser-331, and Ser-333 each carry phosphoserine. The 2; approximate repeat unit spans residues 329 to 333 (SPSPS). Thr-342 carries the phosphothreonine modification. 4 positions are modified to phosphoserine: Ser-343, Ser-347, Ser-352, and Ser-362. Residues 343-348 (SPPCSP) form repeat 3.

It belongs to the cytidylyltransferase family. As to quaternary structure, homodimer. Post-translationally, the serine residues of the C-terminus are phosphorylated. The inactive soluble form is stabilized by phosphorylation, the active membrane bound form is promoted by anionic lipids or diacylglycerol, and is stabilized by dephosphorylation. Monoubiquitinated by the SCF(FBXL2) complex, leading to proteasomal degradation. Brain, placenta, liver, fetal and adult lung.

It localises to the cytoplasm. Its subcellular location is the cytosol. It is found in the membrane. The protein localises to the endoplasmic reticulum membrane. The protein resides in the nucleus. The enzyme catalyses phosphocholine + CTP + H(+) = CDP-choline + diphosphate. It functions in the pathway phospholipid metabolism; phosphatidylcholine biosynthesis; phosphatidylcholine from phosphocholine: step 1/2. With respect to regulation, interconverts between an inactive cytosolic form and an active membrane-bound form. Activation involves disruption of an inhibitory interaction between helices at the base of the active site and the autoinhibitory (AI) region. Activated by anionic lipid vesicles and by oleic acid or diacylglycerol-containing phosphatidylcholine vesicles. Its function is as follows. Catalyzes the key rate-limiting step in the CDP-choline pathway for phosphatidylcholine biosynthesis. The polypeptide is Choline-phosphate cytidylyltransferase A (PCYT1A) (Homo sapiens (Human)).